We begin with the raw amino-acid sequence, 781 residues long: MSSSCNVGASAGGGGSVVMETSNFAHVIFQNVGKSFLPQAALECHYTLTPFITPHPKDWVGIFKVGWSSARDYYTFLWSPMPENYTEGSTVHRTIIFQGYYVPRSDGEFYQFCYVTHTGEIRGASTPFQFRPATPTGEELLTVEDDGNSDILVRVEEVQQECKELQKALRLLTQERDQLQEKQRQQNQELQKSLIEEKEEAQSRVRQLEQDLLKITQKAVLKETELDCLRDKLQKVISERDSLQTQLKNERDERELYKSHVRSAELENTKLSAELQMLKAVELNREVTIAQYQEELHRLRTERDTHPAETGLKEQLRQAEEQLQATRQQAAMLGSELRDASGGRDRTMTELYRVRQEAEELRAHLAEAQEECRHAQDQLDRMKNQTSQEMGRAGGGVGVASELEAELQKEVEELKLRLNMAAEHYKEKYRECQRLRRQVTKLTQQQETQQGDANRNDASTETTLELHTPDAETPSESYPAEIKTVARDVEKSRDEEGNEQEEEDEEEEECSLSVEAELACMEEKWREQCTINENLKLLLANEEKRFKTQVAEKDREVSALRESLVVVTKEKERLEKQYMREGTTRSRRLEVREPVVLRYPLPYPQDPPPLPLVPQQPAELQFGNPYLEQETRDGADGALSPEQTCRPPPLAPPPWGGPVVCSQPSRSLSPPDGLENPTEERPTGGDGEAPAVCEHQSLESNESHTSFCFDTRPDVHKQCPLCEVIFPPHFEQSSFERHVESHWRVCPVCSEQFPLDCQQQLYEKHVHTHFDGNVLNFDNFD.

Coiled-coil stretches lie at residues 148–453 and 488–581; these read NSDI…QGDA and DVEK…YMRE. The segment covering 441–465 has biased composition (polar residues); that stretch reads KLTQQQETQQGDANRNDASTETTLE. Disordered regions lie at residues 441-510 and 630-691; these read KLTQ…EEEC and ETRD…EAPA. Residues 484–495 show a composition bias toward basic and acidic residues; it reads TVARDVEKSRDE. Residues 496–510 show a composition bias toward acidic residues; sequence EGNEQEEEDEEEEEC. The span at 646 to 656 shows a compositional bias: pro residues; it reads RPPPLAPPPWG. UBZ1-type zinc fingers lie at residues 716–742 and 743–769; these read HKQC…VESH and WRVC…VHTH. Zn(2+) is bound by residues Cys719, Cys722, His738, His742, Cys746, Cys749, His765, and His769.

Little expression is observed during pectoral fin development, except for an elevated level of expression in the distal mesenchyme cells of some samples.

May have anti-apoptotic activity. The chain is Tax1-binding protein 1 homolog A from Danio rerio (Zebrafish).